Consider the following 490-residue polypeptide: Aspartyl/glutamyl-tRNA(Asn/Gln) amidotransferase subunit B (490 aa).

Belongs to the GatB/GatE family. GatB subfamily. Heterotrimer of A, B and C subunits.

It catalyses the reaction L-glutamyl-tRNA(Gln) + L-glutamine + ATP + H2O = L-glutaminyl-tRNA(Gln) + L-glutamate + ADP + phosphate + H(+). The catalysed reaction is L-aspartyl-tRNA(Asn) + L-glutamine + ATP + H2O = L-asparaginyl-tRNA(Asn) + L-glutamate + ADP + phosphate + 2 H(+). Its function is as follows. Allows the formation of correctly charged Asn-tRNA(Asn) or Gln-tRNA(Gln) through the transamidation of misacylated Asp-tRNA(Asn) or Glu-tRNA(Gln) in organisms which lack either or both of asparaginyl-tRNA or glutaminyl-tRNA synthetases. The reaction takes place in the presence of glutamine and ATP through an activated phospho-Asp-tRNA(Asn) or phospho-Glu-tRNA(Gln). The polypeptide is Aspartyl/glutamyl-tRNA(Asn/Gln) amidotransferase subunit B (Methylobacterium radiotolerans (strain ATCC 27329 / DSM 1819 / JCM 2831 / NBRC 15690 / NCIMB 10815 / 0-1)).